The primary structure comprises 94 residues: Co-chaperonin GroES (94 aa).

This sequence belongs to the GroES chaperonin family. As to quaternary structure, heptamer of 7 subunits arranged in a ring. Interacts with the chaperonin GroEL.

The protein resides in the cytoplasm. In terms of biological role, together with the chaperonin GroEL, plays an essential role in assisting protein folding. The GroEL-GroES system forms a nano-cage that allows encapsulation of the non-native substrate proteins and provides a physical environment optimized to promote and accelerate protein folding. GroES binds to the apical surface of the GroEL ring, thereby capping the opening of the GroEL channel. The protein is Co-chaperonin GroES of Streptococcus pneumoniae (strain 70585).